Consider the following 104-residue polypeptide: Co-chaperonin GroES 2 (104 aa).

This sequence belongs to the GroES chaperonin family. As to quaternary structure, heptamer of 7 subunits arranged in a ring. Interacts with the chaperonin GroEL.

Its subcellular location is the cytoplasm. Its function is as follows. Together with the chaperonin GroEL, plays an essential role in assisting protein folding. The GroEL-GroES system forms a nano-cage that allows encapsulation of the non-native substrate proteins and provides a physical environment optimized to promote and accelerate protein folding. GroES binds to the apical surface of the GroEL ring, thereby capping the opening of the GroEL channel. In Mesorhizobium japonicum (strain LMG 29417 / CECT 9101 / MAFF 303099) (Mesorhizobium loti (strain MAFF 303099)), this protein is Co-chaperonin GroES 2.